We begin with the raw amino-acid sequence, 149 residues long: Large ribosomal subunit protein bL9 (149 aa).

This sequence belongs to the bacterial ribosomal protein bL9 family.

In terms of biological role, binds to the 23S rRNA. The polypeptide is Large ribosomal subunit protein bL9 (Legionella pneumophila (strain Lens)).